The primary structure comprises 314 residues: Pyridoxal 5'-phosphate synthase-like subunit PDX1.2 (314 aa).

Ala2 is subject to N-acetylalanine.

It belongs to the PdxS/SNZ family. Homodimer or heterodimer with PDX1.1 or PDX1.3. No interaction with PDX2. Expressed in callus tissues, flowers and roots. Weakly expressed in leaves and stems.

It is found in the cytoplasm. Functionally, the protein has no function in the formation of pyridoxal 5'-phosphate. This chain is Pyridoxal 5'-phosphate synthase-like subunit PDX1.2 (PDX12), found in Arabidopsis thaliana (Mouse-ear cress).